The chain runs to 670 residues: Lebercilin-like protein (670 aa).

Positions 30-51 are disordered; sequence KRSPGTGDFSRNSNASNKSVDY. Residues 38-51 show a composition bias toward polar residues; that stretch reads FSRNSNASNKSVDY. 2 coiled-coil regions span residues 148 to 259 and 305 to 336; these read LHKI…EREE and AAQTATKTLQVEVKHLQQKLKEKDRELEIKNI. The segment at 374-393 is disordered; it reads HQGTQKSDVPPLTTKGKKAT. Residues 420 to 440 adopt a coiled-coil conformation; the sequence is EDSKRKYEDLSGEEKHLEVQI. Disordered regions lie at residues 495–516, 557–580, and 609–670; these read RSMQRNGVDDTLGKGTAPYTKG, KHLSNREEMELEHSDSGYEPSFGK, and LKTD…KIII. Basic and acidic residues-rich tracts occupy residues 560–572 and 621–632; these read SNREEMELEHSDS and GSEEPLQSKESH. Residues 651–662 show a composition bias toward polar residues; it reads TVVNSIKPSSPT.

Belongs to the LCA5 family.

This chain is Lebercilin-like protein (LCA5L), found in Homo sapiens (Human).